We begin with the raw amino-acid sequence, 102 residues long: Secretoglobin family 1D member (102 aa).

The first 21 residues, M1–A21, serve as a signal peptide directing secretion. Residue N87 is glycosylated (N-linked (GlcNAc...) asparagine).

The protein belongs to the secretoglobin family. Lipophilin subfamily.

The protein localises to the secreted. May bind androgens and other steroids. May be under transcriptional regulation of steroid hormones. The polypeptide is Secretoglobin family 1D member (SCGB1D) (Bos taurus (Bovine)).